The chain runs to 542 residues: Phosphoacetylglucosamine mutase 2 (542 aa).

The Phosphoserine intermediate role is filled by Ser77. Ser77 contacts Mg(2+). Phosphoserine occurs at positions 77 and 82. Mg(2+)-binding residues include Asp292, Asp294, and Asp296. Substrate is bound by residues 385–387, 510–514, and Arg519; these read EAN and RSSGT.

It belongs to the phosphohexose mutase family. It depends on Mg(2+) as a cofactor.

The protein resides in the cytoplasm. It localises to the nucleus. The enzyme catalyses N-acetyl-alpha-D-glucosamine 1-phosphate = N-acetyl-D-glucosamine 6-phosphate. The protein operates within nucleotide-sugar biosynthesis; UDP-N-acetyl-alpha-D-glucosamine biosynthesis; N-acetyl-alpha-D-glucosamine 1-phosphate from alpha-D-glucosamine 6-phosphate (route I): step 2/2. In terms of biological role, catalyzes the conversion of GlcNAc-6-P into GlcNAc-1-P during the synthesis of uridine diphosphate/UDP-GlcNAc, which is a biosynthetic precursor of chitin and also supplies the amino sugars for N-linked oligosaccharides of glycoproteins. In Schizosaccharomyces pombe (strain 972 / ATCC 24843) (Fission yeast), this protein is Phosphoacetylglucosamine mutase 2.